Here is a 718-residue protein sequence, read N- to C-terminus: Ribosomal RNA large subunit methyltransferase K/L (718 aa).

One can recognise a THUMP domain in the interval 44-155; it reads DAYKVCIYSH…KQYVNVFLCL (112 aa).

It belongs to the methyltransferase superfamily. RlmKL family.

It localises to the cytoplasm. It catalyses the reaction guanosine(2445) in 23S rRNA + S-adenosyl-L-methionine = N(2)-methylguanosine(2445) in 23S rRNA + S-adenosyl-L-homocysteine + H(+). The catalysed reaction is guanosine(2069) in 23S rRNA + S-adenosyl-L-methionine = N(2)-methylguanosine(2069) in 23S rRNA + S-adenosyl-L-homocysteine + H(+). Specifically methylates the guanine in position 2445 (m2G2445) and the guanine in position 2069 (m7G2069) of 23S rRNA. The chain is Ribosomal RNA large subunit methyltransferase K/L from Francisella philomiragia subsp. philomiragia (strain ATCC 25017 / CCUG 19701 / FSC 153 / O#319-036).